The chain runs to 216 residues: UPF0301 protein Nham_3550 (216 aa).

Basic residues predominate over residues methionine 1–threonine 10. The tract at residues methionine 1–glutamine 25 is disordered.

The protein belongs to the UPF0301 (AlgH) family.

The polypeptide is UPF0301 protein Nham_3550 (Nitrobacter hamburgensis (strain DSM 10229 / NCIMB 13809 / X14)).